The sequence spans 496 residues: Cytochrome P450 3A30 (496 aa).

C441 provides a ligand contact to heme.

This sequence belongs to the cytochrome P450 family. Heme is required as a cofactor. As to expression, highly expressed in liver and intestine. Moderate expression in gill and spleen. Low expression in kidney, brain and heart.

The protein localises to the endoplasmic reticulum membrane. It is found in the microsome membrane. It carries out the reaction an organic molecule + reduced [NADPH--hemoprotein reductase] + O2 = an alcohol + oxidized [NADPH--hemoprotein reductase] + H2O + H(+). Functionally, putative steroid 6-beta-hydroxylase. This chain is Cytochrome P450 3A30 (cyp3a30), found in Fundulus heteroclitus (Killifish).